The primary structure comprises 106 residues: Large ribosomal subunit protein uL24 (106 aa).

Belongs to the universal ribosomal protein uL24 family. As to quaternary structure, part of the 50S ribosomal subunit.

In terms of biological role, one of two assembly initiator proteins, it binds directly to the 5'-end of the 23S rRNA, where it nucleates assembly of the 50S subunit. Functionally, one of the proteins that surrounds the polypeptide exit tunnel on the outside of the subunit. The protein is Large ribosomal subunit protein uL24 of Polaromonas naphthalenivorans (strain CJ2).